Consider the following 669-residue polypeptide: Sodium-dependent phosphate transporter (669 aa).

Over 1-6 the chain is Extracellular; that stretch reads MVTGPD. The helical transmembrane segment at 7–27 threads the bilayer; sequence MLWLVITSGIACFFMAFVTGA. The Cytoplasmic portion of the chain corresponds to 28–47; sequence NDIANTFSTSIGSKAISIKK. The helical transmembrane segment at 48–68 threads the bilayer; the sequence is ALIVAFFFEALGASLLGGTVT. At 69 to 86 the chain is on the extracellular side; it reads DSIRSKIINFQVFYDTPE. A helical transmembrane segment spans residues 87–107; that stretch reads FLMLGMCCALMGATVWLAVAT. Residue Arg108 is a topological domain, cytoplasmic. A helical membrane pass occupies residues 109–129; that stretch reads AGLPVSTTHSIIGALLGFGLA. The Extracellular portion of the chain corresponds to 130 to 143; the sequence is TGNMKSIKWEKINN. The helical transmembrane segment at 144–164 threads the bilayer; that stretch reads IVISWLAAPILAGTCSAIAFT. The Cytoplasmic portion of the chain corresponds to 165 to 186; sequence VLRMLILRKKNSFEIIKKMYWF. The chain crosses the membrane as a helical span at residues 187–207; sequence LIFLITLPFSVFLIFHNPIVI. Residues 208-239 lie on the Extracellular side of the membrane; sequence NTQCKMKKDGKVIVSSPCYIEDWSAAHSFYAS. A helical transmembrane segment spans residues 240 to 260; that stretch reads IICILLSSLLTAIGSFVIYII. Residues 261–502 are Cytoplasmic-facing; that stretch reads YNKRINNYNL…YNNGIRGKIK (242 aa). Positions 311–335 are enriched in polar residues; the sequence is AHNNTSNGTKQNQVGNGTKSNNNNV. Disordered regions lie at residues 311–364 and 392–444; these read AHNN…SVEA and TNMN…KNME. The segment covering 342-352 has biased composition (basic and acidic residues); it reads KNVKSQQDDSK. A compositionally biased stretch (low complexity) spans 395 to 433; that stretch reads NENNNNSNKNNNSNKNNNSNKNNNSNKNNNSNNGNSNEG. A helical membrane pass occupies residues 503–523; it reads VQWYILLFGGLSMSLGLSIMG. The Extracellular portion of the chain corresponds to 524-542; that stretch reads YRVIKTVGMKLIKITPARG. Residues 543 to 563 traverse the membrane as a helical segment; the sequence is FTIELISGLVVLFFSICGIPL. Residues 564 to 632 are Cytoplasmic-facing; sequence SSTHCAVSSV…TSCVNLRLFR (69 aa). A helical transmembrane segment spans residues 633–653; the sequence is TVFLSWILTVVFSATVTAGIY. Over 654–669 the chain is Extracellular; that stretch reads SFAAYSPSYIMKMQTV.

Belongs to the inorganic phosphate transporter (PiT) (TC 2.A.20) family.

Its subcellular location is the cell membrane. It carries out the reaction 2 Na(+)(out) + phosphate(out) = 2 Na(+)(in) + phosphate(in). Functionally, sodium-phosphate symporter which preferentially transports the monovalent form of phosphate with a stoichiometry of two sodium ions per phosphate ion. This chain is Sodium-dependent phosphate transporter, found in Plasmodium falciparum.